The chain runs to 268 residues: MHELLLFASVPAHQHHELLQQLAGLTAMQPQHRLERRLVFKAYRKPGLVNVRVGASQDLQGAELQRLNKMLNGGMFYTQVVGPVSEADFGAPASPVADQDAHMSGTDEKSSVRPHYYDYENQPWKLEFRDIPEAATRSAVTTRLMASASLPKGDVTVPMNAWGYNFVTEYAVEGDIFIHNDIVIFLHRVLHYPTESQEPRRQLPALNEMTPLDRSGGYVLQAAITVQDGSNQETMKIASQHLFGLREQLKSAVRLEQADRLSLDTRAK.

The segment at 91-112 (APASPVADQDAHMSGTDEKSSV) is disordered. Basic and acidic residues predominate over residues 99–112 (QDAHMSGTDEKSSV).

Belongs to the Mediator complex subunit 18 family. Component of the Mediator complex.

It localises to the nucleus. Component of the Mediator complex, a coactivator involved in the regulated transcription of nearly all RNA polymerase II-dependent genes. Mediator functions as a bridge to convey information from gene-specific regulatory proteins to the basal RNA polymerase II transcription machinery. Mediator is recruited to promoters by direct interactions with regulatory proteins and serves as a scaffold for the assembly of a functional preinitiation complex with RNA polymerase II and the general transcription factors. In Aspergillus fumigatus (strain ATCC MYA-4609 / CBS 101355 / FGSC A1100 / Af293) (Neosartorya fumigata), this protein is Mediator of RNA polymerase II transcription subunit 18 (srb5).